We begin with the raw amino-acid sequence, 238 residues long: Probable transcriptional regulatory protein llmg_0242 (238 aa).

It belongs to the TACO1 family. YeeN subfamily.

It localises to the cytoplasm. The protein is Probable transcriptional regulatory protein llmg_0242 of Lactococcus lactis subsp. cremoris (strain MG1363).